The sequence spans 349 residues: Autophagy-related protein 3 (349 aa).

The flexible region stretch occupies residues 95 to 173 (ALVNDGDDFK…IRDSGADSKN (79 aa)). Cys244 (glycyl thioester intermediate) is an active-site residue. Residues 248 to 325 (SVMKTLLDRA…DQEVAIRVDQ (78 aa)) form a handle region region. Positions 306-309 (WEEV) match the ATG8 interaction motif (AIM) motif.

Belongs to the ATG3 family. As to quaternary structure, monomer. Interacts with ATG8 through an intermediate thioester bond between Cys-244 and the C-terminal Gly of ATG8. Interacts with the C-terminal region of the E1-like ATG7 enzyme. Also interacts with the ATG12-ATG5 conjugate.

It is found in the cytoplasm. Its function is as follows. E2 conjugating enzyme required for the cytoplasm to vacuole transport (Cvt) and autophagy. Required for selective autophagic degradation of the nucleus (nucleophagy) as well as for mitophagy which contributes to regulate mitochondrial quantity and quality by eliminating the mitochondria to a basal level to fulfill cellular energy requirements and preventing excess ROS production. Responsible for the E2-like covalent binding of phosphatidylethanolamine to the C-terminal Gly of ATG8. The ATG12-ATG5 conjugate plays a role of an E3 and promotes the transfer of ATG8 from ATG3 to phosphatidylethanolamine (PE). This step is required for the membrane association of ATG8. The formation of the ATG8-phosphatidylethanolamine conjugate is essential for autophagy and for the cytoplasm to vacuole transport (Cvt). The ATG8-PE conjugate mediates tethering between adjacent membranes and stimulates membrane hemifusion, leading to expansion of the autophagosomal membrane during autophagy. Autophagy is required for proper vegetative growth, asexual/sexual reproduction, and full virulence. Autophagy is particularly involved in the biosynthesis of deoxynivalenol (DON), an important virulence determinant. The polypeptide is Autophagy-related protein 3 (Gibberella zeae (strain ATCC MYA-4620 / CBS 123657 / FGSC 9075 / NRRL 31084 / PH-1) (Wheat head blight fungus)).